Reading from the N-terminus, the 444-residue chain is Bifunctional protein GlmU (444 aa).

The interval 1 to 226 (MTDSTHRTTA…EAELAGVNSR (226 aa)) is pyrophosphorylase. Residues 13-16 (LAAG), Lys-27, Gln-75, and 80-81 (GT) contribute to the UDP-N-acetyl-alpha-D-glucosamine site. A Mg(2+)-binding site is contributed by Asp-103. UDP-N-acetyl-alpha-D-glucosamine-binding residues include Gly-139, Glu-153, Asn-168, and Asn-224. A Mg(2+)-binding site is contributed by Asn-224. The tract at residues 227-247 (SELARAEATLQTRLRNAAMDA) is linker. The interval 248 to 444 (GVTLVAPETV…QSLKARKEQG (197 aa)) is N-acetyltransferase. UDP-N-acetyl-alpha-D-glucosamine is bound by residues Arg-313 and Lys-331. The active-site Proton acceptor is the His-343. 2 residues coordinate UDP-N-acetyl-alpha-D-glucosamine: Tyr-346 and Asn-357. Residues Ala-360, 366–367 (NY), Ser-385, Ala-403, and Arg-420 contribute to the acetyl-CoA site.

This sequence in the N-terminal section; belongs to the N-acetylglucosamine-1-phosphate uridyltransferase family. It in the C-terminal section; belongs to the transferase hexapeptide repeat family. Homotrimer. Requires Mg(2+) as cofactor.

Its subcellular location is the cytoplasm. It catalyses the reaction alpha-D-glucosamine 1-phosphate + acetyl-CoA = N-acetyl-alpha-D-glucosamine 1-phosphate + CoA + H(+). It carries out the reaction N-acetyl-alpha-D-glucosamine 1-phosphate + UTP + H(+) = UDP-N-acetyl-alpha-D-glucosamine + diphosphate. Its pathway is nucleotide-sugar biosynthesis; UDP-N-acetyl-alpha-D-glucosamine biosynthesis; N-acetyl-alpha-D-glucosamine 1-phosphate from alpha-D-glucosamine 6-phosphate (route II): step 2/2. It functions in the pathway nucleotide-sugar biosynthesis; UDP-N-acetyl-alpha-D-glucosamine biosynthesis; UDP-N-acetyl-alpha-D-glucosamine from N-acetyl-alpha-D-glucosamine 1-phosphate: step 1/1. The protein operates within bacterial outer membrane biogenesis; LPS lipid A biosynthesis. Catalyzes the last two sequential reactions in the de novo biosynthetic pathway for UDP-N-acetylglucosamine (UDP-GlcNAc). The C-terminal domain catalyzes the transfer of acetyl group from acetyl coenzyme A to glucosamine-1-phosphate (GlcN-1-P) to produce N-acetylglucosamine-1-phosphate (GlcNAc-1-P), which is converted into UDP-GlcNAc by the transfer of uridine 5-monophosphate (from uridine 5-triphosphate), a reaction catalyzed by the N-terminal domain. The polypeptide is Bifunctional protein GlmU (Gluconobacter oxydans (strain 621H) (Gluconobacter suboxydans)).